We begin with the raw amino-acid sequence, 97 residues long: Cornifin (97 aa).

The tract at residues 1–42 (MSSQQQKQPCTPPPQPQQQQVKQPCQPPPQEPCVPKTKEPCH) is disordered. Residue serine 2 is modified to N-acetylserine. Tandem repeats lie at residues 3-14 (SQQQKQPCTPPP), 18-29 (QQQVKQPCQPPP), 31-38 (EPCVPKTK), 39-46 (EPCHPKVP), 47-54 (EPCQPKVP), 55-62 (EPCQPKVP), 63-70 (EPCHPKVP), 71-78 (EPCQPKVP), and 79-85 (EPCPSPV). Residues 3 to 29 (SQQQKQPCTPPPQPQQQQVKQPCQPPP) are 2 X 12 AA approximate repeats. Residues 31–85 (EPCVPKTKEPCHPKVPEPCQPKVPEPCQPKVPEPCHPKVPEPCQPKVPEPCPSPV) form a 7 X 8 AA approximate tandem repeats region.

This sequence belongs to the cornifin (SPRR) family. As to expression, not detected in normal lung tissue but seen in tumor tissues. Cells around the keratin pearls contain high levels.

The protein localises to the cytoplasm. Functionally, cross-linked envelope protein of keratinocytes. It is a keratinocyte protein that first appears in the cell cytosol, but ultimately becomes cross-linked to membrane proteins by transglutaminase. All that results in the formation of an insoluble envelope beneath the plasma membrane. This Sus scrofa (Pig) protein is Cornifin (SPRP).